A 431-amino-acid chain; its full sequence is Citrate synthase 1 (431 aa).

Residues H309 and D366 contribute to the active site.

This sequence belongs to the citrate synthase family. As to quaternary structure, homohexamer.

The enzyme catalyses oxaloacetate + acetyl-CoA + H2O = citrate + CoA + H(+). It functions in the pathway carbohydrate metabolism; tricarboxylic acid cycle; isocitrate from oxaloacetate: step 1/2. The sequence is that of Citrate synthase 1 (gltA2) from Mycobacterium tuberculosis (strain CDC 1551 / Oshkosh).